A 377-amino-acid chain; its full sequence is Cytochrome b (377 aa).

Helical transmembrane passes span 36 to 56 (WGSL…FLAM), 80 to 102 (WLIR…LHMA), 115 to 135 (VWLI…MGYI), and 181 to 201 (FFVL…IHLI). Residues His86 and His100 each contribute to the heme b site. Positions 185 and 199 each coordinate heme b. His204 provides a ligand contact to a ubiquinone. The next 4 membrane-spanning stretches (helical) occupy residues 227–247 (YSSK…VIIF), 291–311 (LGGV…PFIS), 326–346 (LFWS…MPVV), and 354–374 (LTST…FLMI).

It belongs to the cytochrome b family. In terms of assembly, the main subunits of complex b-c1 are: cytochrome b, cytochrome c1 and the Rieske protein. Heme b serves as cofactor.

It is found in the mitochondrion inner membrane. Functionally, component of the ubiquinol-cytochrome c reductase complex (complex III or cytochrome b-c1 complex) that is part of the mitochondrial respiratory chain. The b-c1 complex mediates electron transfer from ubiquinol to cytochrome c. Contributes to the generation of a proton gradient across the mitochondrial membrane that is then used for ATP synthesis. In Myzostoma seymourcollegiorum (Polychaete worm), this protein is Cytochrome b (mt:Cyt-b).